We begin with the raw amino-acid sequence, 131 residues long: Small ribosomal subunit protein eS24 (131 aa).

Residues 93-131 are disordered; sequence RHGLYEKKKTSRKQRKERKNRMKKVRGTKKASVGAAGKK. Residues 101 to 121 are compositionally biased toward basic residues; it reads KTSRKQRKERKNRMKKVRGTK.

Belongs to the eukaryotic ribosomal protein eS24 family. As to quaternary structure, component of the small ribosomal subunit. Part of the small subunit (SSU) processome, composed of more than 70 proteins and the RNA chaperone small nucleolar RNA (snoRNA) U3.

The protein resides in the cytoplasm. Its subcellular location is the nucleus. It localises to the nucleolus. Component of the small ribosomal subunit. The ribosome is a large ribonucleoprotein complex responsible for the synthesis of proteins in the cell. Required for processing of pre-rRNA and maturation of 40S ribosomal subunits. Part of the small subunit (SSU) processome, first precursor of the small eukaryotic ribosomal subunit. During the assembly of the SSU processome in the nucleolus, many ribosome biogenesis factors, an RNA chaperone and ribosomal proteins associate with the nascent pre-rRNA and work in concert to generate RNA folding, modifications, rearrangements and cleavage as well as targeted degradation of pre-ribosomal RNA by the RNA exosome. The sequence is that of Small ribosomal subunit protein eS24 (rps24) from Ictalurus punctatus (Channel catfish).